Reading from the N-terminus, the 141-residue chain is VLTAEDRRLLQASVGKLGCRLEDIGADALNRLLIVFPQSKTYFSHFNLSPGSKDIVHQGEKVGKALDSALKHLDDIRGTLSQLSDLHAYNLRVDPVNFQLLSKCLHVSLATHLRNEYNASTCLAWDKFLEQVADVLCEKYR.

In terms of domain architecture, Globin spans 1-141; it reads VLTAEDRRLL…VADVLCEKYR (141 aa). 2 residues coordinate heme b: Q58 and H87.

It belongs to the globin family. Heterotetramer of two alpha chains and two beta chains. As to expression, red blood cells.

Functionally, involved in oxygen transport from the lung to the various peripheral tissues. In Drymarchon melanurus erebennus (Texas indigo snake), this protein is Hemoglobin subunit alpha-D.